Reading from the N-terminus, the 674-residue chain is Ribonuclease E (674 aa).

The S1 motif domain occupies 35–117 (GDIYLGLVDN…LTGNISMPGR (83 aa)). Asp-296 and Asp-339 together coordinate Mg(2+). Cys-397 and Cys-400 together coordinate Zn(2+). 2 disordered regions span residues 458 to 529 (PLDL…RRVE) and 626 to 674 (QPRE…SSAE). Composition is skewed to basic and acidic residues over residues 484-493 (GSEFSEKENI) and 509-529 (TKEK…RRVE). The segment covering 663–674 (RPGRRRRRSSAE) has biased composition (basic residues). The C4 Arg-rich motif, probably responsible for interaction with PNPase signature appears at 665–673 (GRRRRRSSA).

This sequence belongs to the RNase E/G family. In terms of assembly, fractionates in a 250-300 kDa region, which is too small to be the equivalent of an RNA degradosome, as occurs with E.coli RNase E. Interacts with polynucleotide phosphorylase (PNPase, pnp), probably via the C4 Arg-rich motif (residues 665-673). It depends on Mg(2+) as a cofactor.

It localises to the cytoplasm. The protein resides in the cell inner membrane. It catalyses the reaction Endonucleolytic cleavage of single-stranded RNA in A- and U-rich regions.. In terms of biological role, endoribonuclease that plays a central role in rRNA processing and mRNA decay, and probably tRNA processing. Acts on 9S rRNA (the precursor of 5S rRNA) and RNAI, a molecule that controls the replication of ColE1 plasmid. Upon expression in E.coli does not purify with endogenous degradosome proteins. Prefers 5'-monophosphorylated substrates over 5'-triphosphorylated substrates. Complements an rne temperature-sensitive mutation in E.coli, despite being considerably shorter and not able to interact with the E.coli degradosome. Cleaves AU-rich sequences in vitro, tested with psbA2 mRNA. Complements both an rne temperature-sensitive mutation and an rng deletion in E.coli. Acts in the degradation of psaL mRNA in the presence but not the absence of the sRNA PsrR1. Cleaves the rimO-crhR transcript, contributing to the very short half-life of rimO mRNA. Functionally, mRNA for psbA2, one of the core proteins in photosystem II, is degraded in the dark under control of a cis-acting AU-rich box in its 5'-UTR. RNase E cuts in this box, suggesting it is involved in this dark-induced mRNA instability. CRISPR (clustered regularly interspaced short palindromic repeat) is an adaptive immune system that provides protection against mobile genetic elements (viruses, transposable elements and conjugative plasmids). CRISPR clusters contain spacers, sequences complementary to antecedent mobile elements, and target invading nucleic acids. CRISPR clusters are transcribed and processed into CRISPR RNA (crRNA). Endogenous RNase E is required for correct processing of pre-crRNA for the CRISPR3 subtype III-B system in this genome (genes sll7080 to sll7095). This CRISPR3 system does not include a cas6 gene, which is the usual RNase involved in crRNA maturation. The protein is Ribonuclease E of Synechocystis sp. (strain ATCC 27184 / PCC 6803 / Kazusa).